The following is a 205-amino-acid chain: Protein N-terminal glutamine amidohydrolase (205 aa).

Active-site residues include cysteine 28, histidine 81, and aspartate 97.

This sequence belongs to the NTAQ1 family. As to quaternary structure, monomer.

The protein localises to the cytoplasm. It is found in the cytosol. It localises to the nucleus. It catalyses the reaction N-terminal L-glutaminyl-[protein] + H2O = N-terminal L-glutamyl-[protein] + NH4(+). In terms of biological role, mediates the side-chain deamidation of N-terminal glutamine residues to glutamate, an important step in N-end rule pathway of protein degradation. Conversion of the resulting N-terminal glutamine to glutamate renders the protein susceptible to arginylation, polyubiquitination and degradation as specified by the N-end rule. Does not act on substrates with internal or C-terminal glutamine and does not act on non-glutamine residues in any position. Does not deaminate acetylated N-terminal glutamine. With the exception of proline, all tested second-position residues on substrate peptides do not greatly influence the activity. In contrast, a proline at position 2, virtually abolishes deamidation of N-terminal glutamine. This Homo sapiens (Human) protein is Protein N-terminal glutamine amidohydrolase.